The chain runs to 330 residues: HTH-type transcriptional regulator GanR (330 aa).

Residues 2–57 form the HTH lacI-type domain; the sequence is ATIKDIAQEAGFSISTVSRVLNNDESLSVPDETREKIYEAAEKLNYRKKTVRPLVK. The H-T-H motif DNA-binding region spans 4 to 23; the sequence is IKDIAQEAGFSISTVSRVLN.

Functionally, negatively regulates the expression of the ganSPQAB operon. Inhibits transcription of the operon by binding to an operator in the promoter region. In the presence of galactobiose, GanR dissociates from the promoter, resulting in the expression of the gan operon. The polypeptide is HTH-type transcriptional regulator GanR (Bacillus subtilis (strain 168)).